The chain runs to 90 residues: Probable Fe(2+)-trafficking protein (90 aa).

Belongs to the Fe(2+)-trafficking protein family.

Could be a mediator in iron transactions between iron acquisition and iron-requiring processes, such as synthesis and/or repair of Fe-S clusters in biosynthetic enzymes. The polypeptide is Probable Fe(2+)-trafficking protein (Vibrio vulnificus (strain CMCP6)).